The sequence spans 288 residues: Release factor glutamine methyltransferase (288 aa).

S-adenosyl-L-methionine is bound by residues glycine 123–glycine 127, aspartate 146, and asparagine 190. Asparagine 190 to tyrosine 193 is a binding site for substrate.

It belongs to the protein N5-glutamine methyltransferase family. PrmC subfamily.

It carries out the reaction L-glutaminyl-[peptide chain release factor] + S-adenosyl-L-methionine = N(5)-methyl-L-glutaminyl-[peptide chain release factor] + S-adenosyl-L-homocysteine + H(+). In terms of biological role, methylates the class 1 translation termination release factors RF1/PrfA and RF2/PrfB on the glutamine residue of the universally conserved GGQ motif. The sequence is that of Release factor glutamine methyltransferase from Bacillus subtilis (strain 168).